Here is a 272-residue protein sequence, read N- to C-terminus: Tropinone reductase-like 1 (272 aa).

Position 17-41 (17-41) interacts with NAD(+); that stretch reads IITGGASGIGACTAELFHENGAKVV. Residue serine 150 coordinates substrate. Tyrosine 163 (proton acceptor) is an active-site residue.

It belongs to the short-chain dehydrogenases/reductases (SDR) family.

Has no tropinone reductase activity. The sequence is that of Tropinone reductase-like 1 from Erythroxylum coca (Coca plant).